Here is a 277-residue protein sequence, read N- to C-terminus: Thiamine thiazole synthase (277 aa).

NAD(+)-binding positions include Ser36, Gly63, Val126, and 152–154 (HVD). Residues Asp154 and His169 each contribute to the Fe cation site. Met230 contributes to the NAD(+) binding site. Residue Arg240 coordinates glycine.

The protein belongs to the THI4 family. In terms of assembly, homooctamer; tetramer of dimers. Fe(2+) serves as cofactor.

It carries out the reaction hydrogen sulfide + glycine + NAD(+) = ADP-5-ethyl-4-methylthiazole-2-carboxylate + nicotinamide + 3 H2O + H(+). It participates in cofactor biosynthesis; thiamine diphosphate biosynthesis. Involved in the biosynthesis of the thiazole moiety of thiamine. Catalyzes the conversion of NAD and glycine to adenosine diphosphate 5-(2-hydroxyethyl)-4-methylthiazole-2-carboxylate (ADT), an adenylated thiazole intermediate, using free sulfide as a source of sulfur. This chain is Thiamine thiazole synthase, found in Fervidobacterium nodosum (strain ATCC 35602 / DSM 5306 / Rt17-B1).